A 365-amino-acid polypeptide reads, in one-letter code: UPF0718 protein MJ0584 (365 aa).

Transmembrane regions (helical) follow at residues 6 to 26 (MSFIMNIINVMINTIIDYLNV), 32 to 52 (LLMAFLMAGGIASMINKNFII), 67 to 87 (VAAVSGSLLAVCSCTILPLFA), 108 to 128 (AINVLAIFYSAALLGWDIGFL), 130 to 150 (AVFAVVVSILIGLSMEIIFKS), 174 to 194 (ITFFALQFIMLLVITASPKLF), 201 to 221 (LYDGFLLKHLLFIILGIILAV), 245 to 265 (IVFPLLIIGVAIAGAIKAIIP), 282 to 302 (FIASFIGALMYFATLTEVPII), 308 to 328 (LGMGVGPAMALLLAGPSLSIP), and 344 to 364 (TYLGLVVIFSTICGYIAGIIL).

It belongs to the UPF0718 family.

Its subcellular location is the cell membrane. In Methanocaldococcus jannaschii (strain ATCC 43067 / DSM 2661 / JAL-1 / JCM 10045 / NBRC 100440) (Methanococcus jannaschii), this protein is UPF0718 protein MJ0584.